The chain runs to 223 residues: Deoxyribose-phosphate aldolase (223 aa).

D92 acts as the Proton donor/acceptor in catalysis. K154 serves as the catalytic Schiff-base intermediate with acetaldehyde. The Proton donor/acceptor role is filled by K182.

This sequence belongs to the DeoC/FbaB aldolase family. DeoC type 1 subfamily.

Its subcellular location is the cytoplasm. The enzyme catalyses 2-deoxy-D-ribose 5-phosphate = D-glyceraldehyde 3-phosphate + acetaldehyde. Its pathway is carbohydrate degradation; 2-deoxy-D-ribose 1-phosphate degradation; D-glyceraldehyde 3-phosphate and acetaldehyde from 2-deoxy-alpha-D-ribose 1-phosphate: step 2/2. Functionally, catalyzes a reversible aldol reaction between acetaldehyde and D-glyceraldehyde 3-phosphate to generate 2-deoxy-D-ribose 5-phosphate. In Haemophilus influenzae (strain PittEE), this protein is Deoxyribose-phosphate aldolase.